A 487-amino-acid chain; its full sequence is 3-octaprenyl-4-hydroxybenzoate carboxy-lyase (487 aa).

N172 provides a ligand contact to Mn(2+). Prenylated FMN contacts are provided by residues 175–177 (IYR), 189–191 (RWL), and 194–195 (RG). E238 contacts Mn(2+). D287 acts as the Proton donor in catalysis.

The protein belongs to the UbiD family. Homohexamer. It depends on prenylated FMN as a cofactor. Mn(2+) serves as cofactor.

Its subcellular location is the cell membrane. The catalysed reaction is a 4-hydroxy-3-(all-trans-polyprenyl)benzoate + H(+) = a 2-(all-trans-polyprenyl)phenol + CO2. The protein operates within cofactor biosynthesis; ubiquinone biosynthesis. Functionally, catalyzes the decarboxylation of 3-octaprenyl-4-hydroxy benzoate to 2-octaprenylphenol, an intermediate step in ubiquinone biosynthesis. This Actinobacillus pleuropneumoniae serotype 5b (strain L20) protein is 3-octaprenyl-4-hydroxybenzoate carboxy-lyase.